Here is a 153-residue protein sequence, read N- to C-terminus: Troponin C (153 aa).

Residue Ala-1 is modified to Blocked amino end (Ala). EF-hand domains lie at 10 to 45 (EQVQ…LGQT), 46 to 81 (FEEK…FLVE), 86 to 121 (AMQE…LDDK), and 122 to 153 (LTED…MMTG). Asp-59, Asp-61, Ser-63, Glu-65, Glu-70, Asp-99, Asp-110, Asp-135, Asp-137, Ser-139, Thr-141, and Glu-146 together coordinate Ca(2+).

Belongs to the troponin C family.

Troponin is the central regulatory protein of striated muscle contraction. Tn consists of three components: Tn-I which is the inhibitor of actomyosin ATPase, Tn-T which contains the binding site for tropomyosin and Tn-C. The binding of calcium to Tn-C abolishes the inhibitory action of Tn on actin filaments. The polypeptide is Troponin C (Tachypleus tridentatus (Japanese horseshoe crab)).